Here is a 359-residue protein sequence, read N- to C-terminus: MVLRNPDKKGIASALDERSGEIFRRIVESYLESGEPLGSRNLSRLLPISLSPASVRNVMSDLEDLGLIYSPHVSAGRLPTQTGLRFFVDAFMQVGNLSPEERASIERQVGPGNRDHSVENLLTEASQMLSGMSRGAGLVITTKSDPVLKHVEFIRLAPTKALAVLVGEHDQVENRIIELPAGITSAQLTEAANFVNAHLAGQTIPELRTQLEKVKETVRGELDALSQDLVERGLAIWSGSEGDGQPARLIVRGRANLLEGLEGTEDIERLRMLFDDLEKKDSLIEILNLAESGPGVRIFIGSENKLFSLSGSSLIVAPYRDSDDRIVGAVGVIGPTRLNYSRIVPMVDYTAQLMSRMSR.

Belongs to the HrcA family.

In terms of biological role, negative regulator of class I heat shock genes (grpE-dnaK-dnaJ and groELS operons). Prevents heat-shock induction of these operons. The sequence is that of Heat-inducible transcription repressor HrcA from Sinorhizobium medicae (strain WSM419) (Ensifer medicae).